We begin with the raw amino-acid sequence, 210 residues long: Pyridoxine/pyridoxamine 5'-phosphate oxidase (210 aa).

Substrate contacts are provided by residues 7–10 (RDEY) and Lys65. FMN-binding positions include 60 to 65 (RMVLLK), 75 to 76 (FT), Arg81, Lys82, and Gln104. Positions 122, 126, and 130 each coordinate substrate. Residues 139–140 (QS) and Trp183 each bind FMN. Residue 189-191 (RLH) coordinates substrate. FMN is bound at residue Arg193.

The protein belongs to the pyridoxamine 5'-phosphate oxidase family. Homodimer. FMN is required as a cofactor.

It catalyses the reaction pyridoxamine 5'-phosphate + O2 + H2O = pyridoxal 5'-phosphate + H2O2 + NH4(+). It carries out the reaction pyridoxine 5'-phosphate + O2 = pyridoxal 5'-phosphate + H2O2. Its pathway is cofactor metabolism; pyridoxal 5'-phosphate salvage; pyridoxal 5'-phosphate from pyridoxamine 5'-phosphate: step 1/1. It functions in the pathway cofactor metabolism; pyridoxal 5'-phosphate salvage; pyridoxal 5'-phosphate from pyridoxine 5'-phosphate: step 1/1. In terms of biological role, catalyzes the oxidation of either pyridoxine 5'-phosphate (PNP) or pyridoxamine 5'-phosphate (PMP) into pyridoxal 5'-phosphate (PLP). The chain is Pyridoxine/pyridoxamine 5'-phosphate oxidase from Haemophilus influenzae (strain ATCC 51907 / DSM 11121 / KW20 / Rd).